A 354-amino-acid chain; its full sequence is Guanine nucleotide-binding protein G(t) subunit alpha-3 (354 aa).

Residues 1-27 (MGSGISSESKESAKRSKELEKKLQEDA) form a disordered region. The N-myristoyl glycine moiety is linked to residue Gly-2. Over residues 8 to 27 (ESKESAKRSKELEKKLQEDA) the composition is skewed to basic and acidic residues. The 323-residue stretch at 32–354 (RTVKLLLLGA…KENLKDCGLF (323 aa)) folds into the G-alpha domain. A G1 motif region spans residues 35–48 (KLLLLGAGESGKST). Residues 40–47 (GAGESGKS), 175–181 (LHSRVKT), 200–204 (DVGGQ), 269–272 (NKKD), and Ala-326 each bind GTP. Mg(2+) is bound by residues Ser-47 and Thr-181. A G2 motif region spans residues 173–181 (DVLHSRVKT). Residues 196 to 205 (FRMFDVGGQR) form a G3 motif region. Residues 265-272 (VLFLNKKD) form a G4 motif region. Positions 324 to 329 (TCATDT) are G5 motif.

It belongs to the G-alpha family. G(i/o/t/z) subfamily. G proteins are composed of 3 units; alpha, beta and gamma, respectively GNAT3, GNB1 and GNG13 for Gustducin heterotrimer for bitter taste transduction. The alpha chain contains the guanine nucleotide binding site. Component of the TAS2R14-GNAT3 complex, consisting of TAS2R14, GNAT3, GNB1 and GNG2; within the complex interacts with TAS2R14; this complex plays a role in the perception of bitterness. Gustducin heterotrimer may also be composed of GNAT3, GNB3 and GNG13. In terms of processing, potential N-myristoylation may anchor alpha-subunit to the inner surface of plasma membrane. As to expression, expressed in taste buds (sensory organs of clustered epithelial cells) of the circumvallate and foliate papillae of the tongue at protein level. Expressed in enteroendocrine L cells of the gut. Detected also in spermatozoa.

It is found in the cytoplasm. Its function is as follows. Guanine nucleotide-binding protein (G protein) alpha subunit playing a prominent role in bitter and sweet taste transduction as well as in umami (monosodium glutamate, monopotassium glutamate, and inosine monophosphate) taste transduction. Transduction by this alpha subunit involves coupling of specific cell-surface receptors with a cGMP-phosphodiesterase; Activation of phosphodiesterase lowers intracellular levels of cAMP and cGMP which may open a cyclic nucleotide-suppressible cation channel leading to influx of calcium, ultimately leading to release of neurotransmitter. Indeed, denatonium and strychnine induce transient reduction in cAMP and cGMP in taste tissue, whereas this decrease is inhibited by GNAT3 antibody. Gustducin heterotrimer transduces response to bitter and sweet compounds via regulation of phosphodiesterase for alpha subunit, as well as via activation of phospholipase C for beta and gamma subunits, with ultimate increase inositol trisphosphate and increase of intracellular Calcium. GNAT3 can functionally couple to taste receptors to transmit intracellular signal: receptor heterodimer TAS1R2/TAS1R3 senses sweetness and TAS1R1/TAS1R3 transduces umami taste, whereas the T2R family GPCRs such as TAS2R14 act as bitter sensors. Also functions as lumenal sugar sensors in the gut to control the expression of the Na+-glucose transporter SGLT1 in response to dietaty sugar, as well as the secretion of Glucagon-like peptide-1, GLP-1 and glucose-dependent insulinotropic polypeptide, GIP. Thus, may modulate the gut capacity to absorb sugars, with implications in malabsorption syndromes and diet-related disorders including diabetes and obesity. This Homo sapiens (Human) protein is Guanine nucleotide-binding protein G(t) subunit alpha-3 (GNAT3).